Reading from the N-terminus, the 693-residue chain is Putative adenosylcobalamin-dependent ribonucleoside-triphosphate reductase (693 aa).

C90 and C386 are joined by a disulfide. Catalysis depends on residues C375 and E377.

The protein belongs to the class II ribonucleoside-triphosphate reductase family. Adenosylcob(III)alamin serves as cofactor.

It carries out the reaction a 2'-deoxyribonucleoside 5'-triphosphate + [thioredoxin]-disulfide + H2O = a ribonucleoside 5'-triphosphate + [thioredoxin]-dithiol. The protein is Putative adenosylcobalamin-dependent ribonucleoside-triphosphate reductase (50) of Mycobacterium phage D29 (Mycobacteriophage D29).